A 338-amino-acid polypeptide reads, in one-letter code: Methionine aminopeptidase 1D, mitochondrial (338 aa).

A mitochondrion-targeting transit peptide spans 1–47; that stretch reads MAAPCAAQCLYRTGGLRLLQRISRLPHCHKDASLAHQCQFHRSFFWR. H164 is a binding site for substrate. The a divalent metal cation site is built by D181, D192, and H255. H262 is a binding site for substrate. 2 residues coordinate a divalent metal cation: E287 and E318.

This sequence belongs to the peptidase M24A family. Methionine aminopeptidase type 1 subfamily. Requires Co(2+) as cofactor. Zn(2+) is required as a cofactor. The cofactor is Mn(2+). Fe(2+) serves as cofactor.

The protein localises to the mitochondrion. The catalysed reaction is Release of N-terminal amino acids, preferentially methionine, from peptides and arylamides.. Functionally, removes the N-terminal methionine from nascent proteins. The N-terminal methionine is often cleaved when the second residue in the primary sequence is small and uncharged (Met-Ala-, Cys, Gly, Pro, Ser, Thr, or Val). Requires deformylation of the N(alpha)-formylated initiator methionine before it can be hydrolyzed. The sequence is that of Methionine aminopeptidase 1D, mitochondrial (metap1d) from Danio rerio (Zebrafish).